The primary structure comprises 392 residues: Cyclic AMP receptor 1 (392 aa).

At 1 to 13 (MGLLDGNPANETS) the chain is on the extracellular side. The N-linked (GlcNAc...) asparagine glycan is linked to Asn-10. Residues 14–33 (LVLLLFADFSSMLGCMAVLI) traverse the membrane as a helical segment. At 34 to 47 (GFWRLKLLRNHVTK) the chain is on the cytoplasmic side. Residues 48–68 (VIACFCATSFCKDFPSTILTL) form a helical membrane-spanning segment. The Extracellular portion of the chain corresponds to 69–83 (TNTAVNGGFPCYLYA). The helical transmembrane segment at 84 to 109 (IVITYGSFACWLWTLCLAISIYMLIV) threads the bilayer. Topologically, residues 110–120 (KREPEPERFEK) are cytoplasmic. A helical membrane pass occupies residues 121-139 (YYYLLCWGLPLISTIVMLA). The Extracellular portion of the chain corresponds to 140-162 (KNTVQFVGNWCWIGVSFTGYRFG). Residues 163-181 (LFYGPFLFIWAISAVLVGL) traverse the membrane as a helical segment. Residues 182 to 205 (TSRYTYVVIHNGVSDNKEKHLTYQ) are Cytoplasmic-facing. Residues 206-224 (FKLINYIIVFLVCWVFAVV) traverse the membrane as a helical segment. The Extracellular segment spans residues 225-235 (NRIVNGLNMFP). A helical membrane pass occupies residues 236 to 260 (PALNILHTYLSVSHGFWASVTFIYN). Residues 261 to 392 (NPLMWRYFGA…STSTNGQGNN (132 aa)) lie on the Cytoplasmic side of the membrane. Disordered regions lie at residues 292–324 (NKNN…VQCS) and 339–392 (VNNQ…QGNN). Over residues 298-310 (PSPYSSSRGTSGK) the composition is skewed to polar residues. 13 positions are modified to phosphoserine: Ser-299, Ser-302, Ser-303, Ser-304, Ser-308, Ser-360, Ser-361, Ser-362, Ser-363, Ser-364, Ser-366, Ser-367, and Ser-368. The segment covering 340–367 (NNQQNLNNNYGLQQNYNDEGSSSSSLSS) has biased composition (low complexity). Residues 375 to 392 (VEMQNIQISTSTNGQGNN) show a composition bias toward polar residues.

It belongs to the G-protein coupled receptor 5 family. C-terminal Ser or Thr residues may be phosphorylated.

It is found in the membrane. Receptor for cAMP. Coordinates the aggregation of individual cells into a multicellular organism and regulates the expression of a large number of developmentally regulated genes. The activity of this receptor is mediated by G proteins. The sequence is that of Cyclic AMP receptor 1 (carA-1) from Dictyostelium discoideum (Social amoeba).